Consider the following 323-residue polypeptide: tRNA dimethylallyltransferase (323 aa).

An ATP-binding site is contributed by 21–28 (GPTACNKS). 23–28 (TACNKS) contacts substrate. 3 interaction with substrate tRNA regions span residues 46-49 (DSAL), 171-175 (QRVLR), and 252-257 (RCVGYR).

It belongs to the IPP transferase family. In terms of assembly, monomer. Requires Mg(2+) as cofactor.

The catalysed reaction is adenosine(37) in tRNA + dimethylallyl diphosphate = N(6)-dimethylallyladenosine(37) in tRNA + diphosphate. In terms of biological role, catalyzes the transfer of a dimethylallyl group onto the adenine at position 37 in tRNAs that read codons beginning with uridine, leading to the formation of N6-(dimethylallyl)adenosine (i(6)A). In Buchnera aphidicola subsp. Baizongia pistaciae (strain Bp), this protein is tRNA dimethylallyltransferase.